A 161-amino-acid chain; its full sequence is Decarboxylase (161 aa).

In terms of domain architecture, EthD spans 29 to 131 (QGMSEEAYRK…VGDHENFADT (103 aa)).

It belongs to the tpcK family.

It carries out the reaction atrochrysone carboxylate + H(+) = atrochrysone + CO2. It functions in the pathway secondary metabolite biosynthesis. In terms of biological role, decarboxylase; part of the gene cluster that mediates the biosynthesis of monodictyphenone, a prenyl xanthone derivative. The pathway begins with the synthesis of atrochrysone thioester by the polyketide synthase (PKS) mdpG. The atrochrysone carboxyl ACP thioesterase mdpF then breaks the thioester bond and releases the atrochrysone carboxylic acid from mdpG. The atrochrysone carboxylic acid is then converted to atrochrysone which is further transformed into emodin anthrone by mdpH-1 and mdpH-2. Emodin is further modified to yield monodictyphenone via several steps involving mdpB, mdpC mdpJ, mdpK and mdpL. These enzymes with xptA, xptB and xptC are also proposed to be involved in the synthesis of shamixanthone from emodin. Especially, direct reduction of emodin by the short chain dehydrogenase mdpC followed by dehydration catalyzed by the scytalone dehydratase-like protein mdpB gives loss of oxygen and formation of chrysophanol intermediate in two simple steps. The sequence is that of Decarboxylase from Emericella nidulans (strain FGSC A4 / ATCC 38163 / CBS 112.46 / NRRL 194 / M139) (Aspergillus nidulans).